Reading from the N-terminus, the 201-residue chain is LexA repressor 1 (201 aa).

The segment at residues 27 to 47 (LAEIAQAFGFASRNAAQKHVQ) is a DNA-binding region (H-T-H motif). Catalysis depends on for autocatalytic cleavage activity residues S122 and K159.

Belongs to the peptidase S24 family. As to quaternary structure, homodimer.

It catalyses the reaction Hydrolysis of Ala-|-Gly bond in repressor LexA.. Its function is as follows. Represses a number of genes involved in the response to DNA damage (SOS response), including recA and lexA. In the presence of single-stranded DNA, RecA interacts with LexA causing an autocatalytic cleavage which disrupts the DNA-binding part of LexA, leading to derepression of the SOS regulon and eventually DNA repair. The sequence is that of LexA repressor 1 from Xanthomonas oryzae pv. oryzae (strain KACC10331 / KXO85).